A 95-amino-acid chain; its full sequence is MSFKPLHDRIAIKPIEHEEKTKGGIIIPDTAKEKPMQGIITAVGTGTRNEKGEVYPLELKVGDKVLYGKWAGTEIEIKGEKLIVMKENDVLGIIN.

Belongs to the GroES chaperonin family. Heptamer of 7 subunits arranged in a ring. Interacts with the chaperonin GroEL.

The protein resides in the cytoplasm. In terms of biological role, together with the chaperonin GroEL, plays an essential role in assisting protein folding. The GroEL-GroES system forms a nano-cage that allows encapsulation of the non-native substrate proteins and provides a physical environment optimized to promote and accelerate protein folding. GroES binds to the apical surface of the GroEL ring, thereby capping the opening of the GroEL channel. This Rickettsia canadensis (strain McKiel) protein is Co-chaperonin GroES.